We begin with the raw amino-acid sequence, 436 residues long: Methylenetetrahydrofolate--tRNA-(uracil-5-)-methyltransferase TrmFO (436 aa).

11-16 (GAGLAG) serves as a coordination point for FAD.

The protein belongs to the MnmG family. TrmFO subfamily. FAD is required as a cofactor.

The protein localises to the cytoplasm. The enzyme catalyses uridine(54) in tRNA + (6R)-5,10-methylene-5,6,7,8-tetrahydrofolate + NADH + H(+) = 5-methyluridine(54) in tRNA + (6S)-5,6,7,8-tetrahydrofolate + NAD(+). It catalyses the reaction uridine(54) in tRNA + (6R)-5,10-methylene-5,6,7,8-tetrahydrofolate + NADPH + H(+) = 5-methyluridine(54) in tRNA + (6S)-5,6,7,8-tetrahydrofolate + NADP(+). In terms of biological role, catalyzes the folate-dependent formation of 5-methyl-uridine at position 54 (M-5-U54) in all tRNAs. This is Methylenetetrahydrofolate--tRNA-(uracil-5-)-methyltransferase TrmFO from Shouchella clausii (strain KSM-K16) (Alkalihalobacillus clausii).